A 295-amino-acid polypeptide reads, in one-letter code: MKPTYCGYAAIIGRPNVGKSTLLNQLLEQKISITSRKPQTTRYQILGVKTFKDIQVIYVDTPGLHAGTERTINRYMNRTARGALRDVDAIVFVIEPHWESQDAWVLDNLKEIETPVFLVINKVDKIKNRAELLPLIEKVSSLYAFQKITPLSAKTGDQVGTLEQAVHQLMPESPFYFPPEQVTDRSDQFMASEIIREKLMRLLGQEIPYSLAVTLIEFRKEEKIIRISAVIWVEKKSQKGIVIGKGGERLKRVGTNARLDMEKWFGKRVFLQLWVKVKSGWADNERLLRELGFEE.

The 168-residue stretch at 5 to 172 folds into the Era-type G domain; sequence YCGYAAIIGR…EQAVHQLMPE (168 aa). Residues 13–20 are G1; sequence GRPNVGKS. 13 to 20 provides a ligand contact to GTP; it reads GRPNVGKS. Residues 39-43 form a G2 region; it reads QTTRY. Residues 60–63 are G3; it reads DTPG. Residues 60 to 64 and 121 to 124 contribute to the GTP site; these read DTPGL and NKVD. Positions 121 to 124 are G4; sequence NKVD. A G5 region spans residues 151–153; the sequence is LSA. Residues 203-279 enclose the KH type-2 domain; that stretch reads LGQEIPYSLA…FLQLWVKVKS (77 aa).

It belongs to the TRAFAC class TrmE-Era-EngA-EngB-Septin-like GTPase superfamily. Era GTPase family. Monomer.

Its subcellular location is the cytoplasm. The protein resides in the cell inner membrane. An essential GTPase that binds both GDP and GTP, with rapid nucleotide exchange. Plays a role in 16S rRNA processing and 30S ribosomal subunit biogenesis and possibly also in cell cycle regulation and energy metabolism. The chain is GTPase Era from Coxiella burnetii (strain RSA 331 / Henzerling II).